Here is a 379-residue protein sequence, read N- to C-terminus: MTILRKSHPLMKMVNHAFIDLPAPSNISGWWNFGSLLGLCLIIQIASGLFLDMHYTSDTLTAFSSVAHICRDVNYGWLIRYIHANGASLFFVCLYLHIGRGIYYGSYSYKETWNIGIILLFLTMATAFMGYVLPWGQMSFWGATVITNLLSAIPYIGTDLVEWIWGGFSVDKATLNRFFAFHFILPFIIAAMAMVHLLFLHETGSNNPLGIPSNCDKIPFHPYYTTKDFLGIVLLLTFFFTMVPFFPDLLGDPDNYSPANPLNTPPHIKPEWYFLFAYAILRSIPNKLGGVIALILSILILALLPHIQTASQRSLMFRPISQFLFWLLVSDVLVLTWIGGQPVEPPFIIIGQIASLSYFTIILVLMPIAGINENKMLKW.

The next 4 membrane-spanning stretches (helical) occupy residues 33–53 (FGSL…FLDM), 77–98 (WLIR…YLHI), 113–133 (WNIG…GYVL), and 178–198 (FFAF…VHLL). The heme b site is built by H83 and H97. Heme b-binding residues include H182 and H196. Position 201 (H201) interacts with a ubiquinone. 4 helical membrane passes run 226-246 (TKDF…VPFF), 288-308 (LGGV…PHIQ), 320-340 (ISQF…WIGG), and 347-367 (FIII…VLMP).

It belongs to the cytochrome b family. As to quaternary structure, the cytochrome bc1 complex contains 11 subunits: 3 respiratory subunits (MT-CYB, CYC1 and UQCRFS1), 2 core proteins (UQCRC1 and UQCRC2) and 6 low-molecular weight proteins (UQCRH/QCR6, UQCRB/QCR7, UQCRQ/QCR8, UQCR10/QCR9, UQCR11/QCR10 and a cleavage product of UQCRFS1). This cytochrome bc1 complex then forms a dimer. The cofactor is heme b.

The protein resides in the mitochondrion inner membrane. In terms of biological role, component of the ubiquinol-cytochrome c reductase complex (complex III or cytochrome b-c1 complex) that is part of the mitochondrial respiratory chain. The b-c1 complex mediates electron transfer from ubiquinol to cytochrome c. Contributes to the generation of a proton gradient across the mitochondrial membrane that is then used for ATP synthesis. The chain is Cytochrome b (MT-CYB) from Dipodomys nelsoni (Nelson's kangaroo rat).